The primary structure comprises 232 residues: Phosphatidylserine decarboxylase proenzyme (232 aa).

The active-site Schiff-base intermediate with substrate; via pyruvic acid is the S190. At S190 the chain carries Pyruvic acid (Ser); by autocatalysis.

Belongs to the phosphatidylserine decarboxylase family. PSD-A subfamily. As to quaternary structure, heterodimer of a large membrane-associated beta subunit and a small pyruvoyl-containing alpha subunit. The cofactor is pyruvate. Post-translationally, is synthesized initially as an inactive proenzyme. Formation of the active enzyme involves a self-maturation process in which the active site pyruvoyl group is generated from an internal serine residue via an autocatalytic post-translational modification. Two non-identical subunits are generated from the proenzyme in this reaction, and the pyruvate is formed at the N-terminus of the alpha chain, which is derived from the carboxyl end of the proenzyme. The post-translation cleavage follows an unusual pathway, termed non-hydrolytic serinolysis, in which the side chain hydroxyl group of the serine supplies its oxygen atom to form the C-terminus of the beta chain, while the remainder of the serine residue undergoes an oxidative deamination to produce ammonia and the pyruvoyl prosthetic group on the alpha chain.

It localises to the cell membrane. The enzyme catalyses a 1,2-diacyl-sn-glycero-3-phospho-L-serine + H(+) = a 1,2-diacyl-sn-glycero-3-phosphoethanolamine + CO2. It participates in phospholipid metabolism; phosphatidylethanolamine biosynthesis; phosphatidylethanolamine from CDP-diacylglycerol: step 2/2. Its function is as follows. Catalyzes the formation of phosphatidylethanolamine (PtdEtn) from phosphatidylserine (PtdSer). In Agrobacterium fabrum (strain C58 / ATCC 33970) (Agrobacterium tumefaciens (strain C58)), this protein is Phosphatidylserine decarboxylase proenzyme.